A 403-amino-acid polypeptide reads, in one-letter code: Coenzyme A biosynthesis bifunctional protein CoaBC (403 aa).

The tract at residues 1 to 197 (MISEIMHPTK…GNNLKKEGNR (197 aa)) is phosphopantothenoylcysteine decarboxylase. The segment at 198-403 (VLILNGGTVE…VEKVKKLVKS (206 aa)) is phosphopantothenate--cysteine ligase. Residues Asp-285, Lys-294, and Phe-327 each contribute to the CTP site.

This sequence in the N-terminal section; belongs to the HFCD (homo-oligomeric flavin containing Cys decarboxylase) superfamily. It in the C-terminal section; belongs to the PPC synthetase family. In terms of assembly, homododecamer. The CoaC domain is responsible for dodecamer formation. Mg(2+) serves as cofactor. The cofactor is FMN.

It catalyses the reaction N-[(R)-4-phosphopantothenoyl]-L-cysteine + H(+) = (R)-4'-phosphopantetheine + CO2. It carries out the reaction (R)-4'-phosphopantothenate + L-cysteine + CTP = N-[(R)-4-phosphopantothenoyl]-L-cysteine + CMP + diphosphate + H(+). The protein operates within cofactor biosynthesis; coenzyme A biosynthesis. Catalyzes two sequential steps in the biosynthesis of coenzyme A. In the first step cysteine is conjugated to 4'-phosphopantothenate to form 4-phosphopantothenoylcysteine. In the second step the latter compound is decarboxylated to form 4'-phosphopantotheine. This Methanocaldococcus jannaschii (strain ATCC 43067 / DSM 2661 / JAL-1 / JCM 10045 / NBRC 100440) (Methanococcus jannaschii) protein is Coenzyme A biosynthesis bifunctional protein CoaBC.